The sequence spans 416 residues: Mitochondrial inner membrane i-AAA protease complex subunit MGR1 (416 aa).

The interval methionine 1–asparagine 28 is disordered. Topologically, residues methionine 1–glycine 56 are mitochondrial intermembrane. A compositionally biased stretch (basic and acidic residues) spans aspartate 15–asparagine 28. A helical membrane pass occupies residues leucine 57–tryptophan 73. At arginine 74–lysine 151 the chain is on the mitochondrial matrix side. Residues leucine 152–leucine 169 form a helical membrane-spanning segment. Over threonine 170–histidine 416 the chain is Mitochondrial intermembrane. Residues serine 390 to glutamine 400 show a composition bias toward polar residues. The disordered stretch occupies residues serine 390–histidine 416.

Belongs to the MGR1 family. As to quaternary structure, component of the mitochondrial inner membrane i-AAA protease complex composed of at least MRG1 and YME1. Interacts directly with YME1.

The protein resides in the mitochondrion inner membrane. Its function is as follows. Component of the mitochondrial inner membrane i-AAA protease complex required for mitochondrial inner membrane protein turnover. Required for growth of cells lacking the mitochondrial genome. The protein is Mitochondrial inner membrane i-AAA protease complex subunit MGR1 (MGR1) of Saccharomyces cerevisiae (strain YJM789) (Baker's yeast).